The following is a 343-amino-acid chain: Methylthioribose-1-phosphate isomerase (343 aa).

Substrate is bound by residues arginine 48–alanine 50, arginine 88, and glutamine 193. Residue aspartate 234 is the Proton donor of the active site. A substrate-binding site is contributed by asparagine 244–lysine 245.

Belongs to the eIF-2B alpha/beta/delta subunits family. MtnA subfamily.

It carries out the reaction 5-(methylsulfanyl)-alpha-D-ribose 1-phosphate = 5-(methylsulfanyl)-D-ribulose 1-phosphate. The protein operates within amino-acid biosynthesis; L-methionine biosynthesis via salvage pathway; L-methionine from S-methyl-5-thio-alpha-D-ribose 1-phosphate: step 1/6. In terms of biological role, catalyzes the interconversion of methylthioribose-1-phosphate (MTR-1-P) into methylthioribulose-1-phosphate (MTRu-1-P). This is Methylthioribose-1-phosphate isomerase from Thermotoga petrophila (strain ATCC BAA-488 / DSM 13995 / JCM 10881 / RKU-1).